The sequence spans 508 residues: Photosystem II CP47 reaction center protein (508 aa).

6 consecutive transmembrane segments (helical) span residues 21–36 (SVHIMHTALVAGWAGS), 101–115 (IVFSGLCFLAAIWHW), 140–156 (GIHLFLSGVACFGFGAF), 203–218 (IAAGTLGILAGLFHLS), 237–252 (VLSSSIAAVFFAAFVV), and 457–472 (SFALLFFFGHIWHGAR).

It belongs to the PsbB/PsbC family. PsbB subfamily. PSII is composed of 1 copy each of membrane proteins PsbA, PsbB, PsbC, PsbD, PsbE, PsbF, PsbH, PsbI, PsbJ, PsbK, PsbL, PsbM, PsbT, PsbX, PsbY, PsbZ, Psb30/Ycf12, at least 3 peripheral proteins of the oxygen-evolving complex and a large number of cofactors. It forms dimeric complexes. Binds multiple chlorophylls. PSII binds additional chlorophylls, carotenoids and specific lipids. is required as a cofactor.

The protein localises to the plastid. It is found in the chloroplast thylakoid membrane. In terms of biological role, one of the components of the core complex of photosystem II (PSII). It binds chlorophyll and helps catalyze the primary light-induced photochemical processes of PSII. PSII is a light-driven water:plastoquinone oxidoreductase, using light energy to abstract electrons from H(2)O, generating O(2) and a proton gradient subsequently used for ATP formation. The chain is Photosystem II CP47 reaction center protein from Arabis hirsuta (Hairy rock-cress).